A 413-amino-acid chain; its full sequence is Na(+)/H(+) antiporter NhaA (413 aa).

A run of 11 helical transmembrane segments spans residues 15-35 (LESG…ALFV), 57-77 (LLHW…GLEI), 93-113 (ALPC…YASL), 123-143 (GWAI…SLLG), 152-172 (IFLA…IAVF), 175-195 (AELN…LLGF), 211-231 (VALW…GVVL), 261-281 (WVAF…SFAG), 295-315 (VALG…WLAI), 333-353 (GVSL…LLAF), and 364-384 (VGVL…LSLT).

Belongs to the NhaA Na(+)/H(+) (TC 2.A.33) antiporter family.

The protein localises to the cell inner membrane. The catalysed reaction is Na(+)(in) + 2 H(+)(out) = Na(+)(out) + 2 H(+)(in). In terms of biological role, na(+)/H(+) antiporter that extrudes sodium in exchange for external protons. The polypeptide is Na(+)/H(+) antiporter NhaA (Caulobacter vibrioides (strain ATCC 19089 / CIP 103742 / CB 15) (Caulobacter crescentus)).